We begin with the raw amino-acid sequence, 606 residues long: MATKDPTAVERANLLNMAKLSIKGLIESALSFGRTLDSDYPPLQQFFVVMEHCLKHGLKVRKSFLSYNKTIWGPLELVEKLYPEAEEIGASVRDLPGLKTPLGRARAWLRLALMQKKMADYLRCLIIQRDLLSEFYEYHALMMEEEGAVIVGLLVGLNVIDANLCVKGEDLDSQVGVIDFSMYLKNEEDIGNKERNVQIAAILDQKNYVEELNRQLNSTVSSLHSRVDSLEKSNTKLIEELAIAKNNIIKLQEENHQLRNENKLILMKTQQHIEVTKVDVETELQTYKHSRQGLDEMYNEARRQLRDESQLRQDVENELAVQVSMKHEIELAMKLLEKDIHEKQDTLIGLRQQLEEVKAINIEMYQKLQGSEDGLKEKNEIIARLEEKTNKITAAMRQLEQRLQQAEKAQMEAEDEDEKYLQECLSKSDSLQKQISQKEKQLVQLETDLKIEKEWRQTLQEDLQKEKDALSHLRNETQQIISLKKEFLNLQDENQQLKKIYHEQEQALQELGNKLSESKLKIEDIKEANKALQGLVWLKDKEATHCKLCEKEFSLSKRKHHCRNCGEIFCNACSDNELPLPSSPKPVRVCDSCHALLIQRCSSNLP.

One can recognise an RUN domain in the interval 37–169 (DSDYPPLQQF…IDANLCVKGE (133 aa)). Positions 210–534 (EELNRQLNST…IKEANKALQG (325 aa)) form a coiled coil. Residues 540–598 (DKEATHCKLCEKEFSLSKRKHHCRNCGEIFCNACSDNELPLPSSPKPVRVCDSCHALLI) form an FYVE-type zinc finger. 8 residues coordinate Zn(2+): cysteine 546, cysteine 549, cysteine 562, cysteine 565, cysteine 570, cysteine 573, cysteine 590, and cysteine 593.

Interacts with BMX.

The protein resides in the nucleus. The sequence is that of RUN and FYVE domain-containing protein 2 (RUFY2) from Pongo abelii (Sumatran orangutan).